The sequence spans 308 residues: Ribosomal protein L11 methyltransferase (308 aa).

S-adenosyl-L-methionine is bound by residues T157, G178, D200, and N243.

This sequence belongs to the methyltransferase superfamily. PrmA family.

The protein localises to the cytoplasm. The catalysed reaction is L-lysyl-[protein] + 3 S-adenosyl-L-methionine = N(6),N(6),N(6)-trimethyl-L-lysyl-[protein] + 3 S-adenosyl-L-homocysteine + 3 H(+). Methylates ribosomal protein L11. The sequence is that of Ribosomal protein L11 methyltransferase from Pelotomaculum thermopropionicum (strain DSM 13744 / JCM 10971 / SI).